A 364-amino-acid chain; its full sequence is Spermidine/putrescine import ATP-binding protein PotA (364 aa).

The 231-residue stretch at 5-235 (LSFKGVTKGF…PVNRFVADFI (231 aa)) folds into the ABC transporter domain. 37–44 (GPSGCGKT) contacts ATP.

This sequence belongs to the ABC transporter superfamily. Spermidine/putrescine importer (TC 3.A.1.11.1) family. In terms of assembly, the complex is composed of two ATP-binding proteins (PotA), two transmembrane proteins (PotB and PotC) and a solute-binding protein (PotD).

It localises to the cell membrane. The catalysed reaction is ATP + H2O + polyamine-[polyamine-binding protein]Side 1 = ADP + phosphate + polyamineSide 2 + [polyamine-binding protein]Side 1.. Its function is as follows. Part of the ABC transporter complex PotABCD involved in spermidine/putrescine import. Responsible for energy coupling to the transport system. In Staphylococcus haemolyticus (strain JCSC1435), this protein is Spermidine/putrescine import ATP-binding protein PotA.